The primary structure comprises 548 residues: Lysine--tRNA ligase (548 aa).

Positions 43–51 (PSGVPHLGN) match the 'HIGH' region motif. Residues 308-312 (PFSSS) carry the 'KMSKS' region motif.

This sequence belongs to the class-I aminoacyl-tRNA synthetase family.

It is found in the cytoplasm. It carries out the reaction tRNA(Lys) + L-lysine + ATP = L-lysyl-tRNA(Lys) + AMP + diphosphate. In Halobacterium salinarum (strain ATCC 700922 / JCM 11081 / NRC-1) (Halobacterium halobium), this protein is Lysine--tRNA ligase.